The sequence spans 209 residues: Ribosomal RNA large subunit methyltransferase E (209 aa).

Residues glycine 63, tryptophan 65, aspartate 83, aspartate 99, and aspartate 124 each contribute to the S-adenosyl-L-methionine site. Residue lysine 164 is the Proton acceptor of the active site.

It belongs to the class I-like SAM-binding methyltransferase superfamily. RNA methyltransferase RlmE family.

The protein resides in the cytoplasm. It catalyses the reaction uridine(2552) in 23S rRNA + S-adenosyl-L-methionine = 2'-O-methyluridine(2552) in 23S rRNA + S-adenosyl-L-homocysteine + H(+). Functionally, specifically methylates the uridine in position 2552 of 23S rRNA at the 2'-O position of the ribose in the fully assembled 50S ribosomal subunit. This chain is Ribosomal RNA large subunit methyltransferase E, found in Shigella dysenteriae serotype 1 (strain Sd197).